Consider the following 150-residue polypeptide: UPF0756 membrane protein HDEF_0364 (150 aa).

Transmembrane regions (helical) follow at residues 1-21, 28-48, 51-71, 88-108, and 123-143; these read MMFF…GLIS, ISVV…FPWV, YALK…IASG, ILGI…VSLM, and ILGV…AGLL.

The protein belongs to the UPF0756 family.

Its subcellular location is the cell membrane. In Hamiltonella defensa subsp. Acyrthosiphon pisum (strain 5AT), this protein is UPF0756 membrane protein HDEF_0364.